The primary structure comprises 416 residues: Enolase (416 aa).

Gln160 is a binding site for (2R)-2-phosphoglycerate. Residue Glu204 is the Proton donor of the active site. Mg(2+) is bound by residues Asp239, Glu280, and Asp306. 4 residues coordinate (2R)-2-phosphoglycerate: Lys331, Arg360, Ser361, and Lys382. The active-site Proton acceptor is the Lys331.

This sequence belongs to the enolase family. Mg(2+) is required as a cofactor.

It localises to the cytoplasm. It is found in the secreted. Its subcellular location is the cell surface. The enzyme catalyses (2R)-2-phosphoglycerate = phosphoenolpyruvate + H2O. It functions in the pathway carbohydrate degradation; glycolysis; pyruvate from D-glyceraldehyde 3-phosphate: step 4/5. Catalyzes the reversible conversion of 2-phosphoglycerate (2-PG) into phosphoenolpyruvate (PEP). It is essential for the degradation of carbohydrates via glycolysis. In Sulfolobus acidocaldarius (strain ATCC 33909 / DSM 639 / JCM 8929 / NBRC 15157 / NCIMB 11770), this protein is Enolase.